Consider the following 490-residue polypeptide: Limb region 1 protein homolog (490 aa).

Topologically, residues 1–19 (MEGQDEVSAREQHFHSQVR) are extracellular. The helical transmembrane segment at 20–40 (ESTICFLLFAILYVVSYFIIT) threads the bilayer. Residues 41-62 (RYKRKSDEQEDEDAIVNRISLF) lie on the Cytoplasmic side of the membrane. The chain crosses the membrane as a helical span at residues 63 to 83 (LSTFTLAVSAGAVLLLPFSII). Residues 84 to 110 (SNEILLSFPQNYYIQWLNGSLIHGLWN) lie on the Extracellular side of the membrane. A helical transmembrane segment spans residues 111 to 131 (LASLFSNLCLFVLMPFAFFFL). Residues 132–151 (ESEGFAGLKKGIRARILETL) lie on the Cytoplasmic side of the membrane. Residues 152–172 (VMLLLLALLILGIVWVASALI) traverse the membrane as a helical segment. Residues 173–187 (DNDAASMESLYDLWE) are Extracellular-facing. A helical membrane pass occupies residues 188–208 (FYLPYLYSCISLMGCLLLLLC). At 209 to 291 (TPVGLSRMFT…RKKASAWERN (83 aa)) the chain is on the cytoplasmic side. Residues 250–287 (RLNGLSSSVEYNIMELEQELENVKTLKTKLERRKKASA) adopt a coiled-coil conformation. The helical transmembrane segment at 292–312 (LVYPAVMVLLLIETSISVLLV) threads the bilayer. Topologically, residues 313–339 (ACNILCLLVDETAMPKGTRGPGIGNAS) are extracellular. A helical transmembrane segment spans residues 340-360 (LSTFGFVGAALEIILIFYLMV). Over 361 to 383 (SSVVGFYSLRFFGNFTPKKDDTT) the chain is Cytoplasmic. The helical transmembrane segment at 384–404 (MTKIIGNCVSILVLSSALPVM) threads the bilayer. Residues 405-426 (SRTLGITRFDLLGDFGRFNWLG) lie on the Extracellular side of the membrane. A helical membrane pass occupies residues 427 to 447 (NFYIVLSYNLLFAIVTTLCLV). The Cytoplasmic portion of the chain corresponds to 448-490 (RKFTSAVREELFKALGLHKLHLPNTSRDSETAKPSVNGHQKAL).

It belongs to the LIMR family. In terms of tissue distribution, widely expressed with strongest expression in heart and pancreas.

The protein resides in the membrane. Putative membrane receptor. This chain is Limb region 1 protein homolog (LMBR1), found in Homo sapiens (Human).